We begin with the raw amino-acid sequence, 267 residues long: Tryptophan synthase alpha chain (267 aa).

Residues Glu-49 and Asp-60 each act as proton acceptor in the active site.

The protein belongs to the TrpA family. In terms of assembly, tetramer of two alpha and two beta chains.

The catalysed reaction is (1S,2R)-1-C-(indol-3-yl)glycerol 3-phosphate + L-serine = D-glyceraldehyde 3-phosphate + L-tryptophan + H2O. It functions in the pathway amino-acid biosynthesis; L-tryptophan biosynthesis; L-tryptophan from chorismate: step 5/5. In terms of biological role, the alpha subunit is responsible for the aldol cleavage of indoleglycerol phosphate to indole and glyceraldehyde 3-phosphate. This Acidothermus cellulolyticus (strain ATCC 43068 / DSM 8971 / 11B) protein is Tryptophan synthase alpha chain.